Here is a 456-residue protein sequence, read N- to C-terminus: tRNA modification GTPase MnmE (456 aa).

Positions 24, 81, and 120 each coordinate (6S)-5-formyl-5,6,7,8-tetrahydrofolate. Residues 216–379 (GMTVVIAGRP…LRDHLKGCMG (164 aa)) enclose the TrmE-type G domain. Residue Asn-226 coordinates K(+). Residues 226 to 231 (NAGKSS), 245 to 251 (TDIAGTT), 270 to 273 (DTAG), and 335 to 338 (NKAD) each bind GTP. Ser-230 contacts Mg(2+). K(+) is bound by residues Thr-245, Ile-247, and Thr-250. Thr-251 lines the Mg(2+) pocket. Lys-456 contacts (6S)-5-formyl-5,6,7,8-tetrahydrofolate.

The protein belongs to the TRAFAC class TrmE-Era-EngA-EngB-Septin-like GTPase superfamily. TrmE GTPase family. As to quaternary structure, homodimer. Heterotetramer of two MnmE and two MnmG subunits. The cofactor is K(+).

It is found in the cytoplasm. In terms of biological role, exhibits a very high intrinsic GTPase hydrolysis rate. Involved in the addition of a carboxymethylaminomethyl (cmnm) group at the wobble position (U34) of certain tRNAs, forming tRNA-cmnm(5)s(2)U34. The protein is tRNA modification GTPase MnmE of Pseudomonas putida (strain ATCC 47054 / DSM 6125 / CFBP 8728 / NCIMB 11950 / KT2440).